The primary structure comprises 94 residues: RING finger protein Z (94 aa).

Residues 1 to 19 (MGNCNGASKSNQPDSSRVT) show a composition bias toward polar residues. The interval 1–20 (MGNCNGASKSNQPDSSRVTQ) is disordered. The N-myristoyl glycine; by host moiety is linked to residue Gly-2. The RING-type; atypical zinc-finger motif lies at 39-75 (CKCCWFADTNLITCNDHYLCLRCHQVMLRNSDLCNIC). The PTAP/PSAP motif motif lies at 89–92 (PTAP).

The protein belongs to the arenaviridae Z protein family. In terms of assembly, interacts with protein NP; this interaction probably directs the encapsidated genome to budding sites. Interacts (via RING domain) with polymerase L; this interaction inhibits viral transcription and replication, Z partially blocks the product exit tunnel for the releasing nascent RNA product. Interacts with the glycoprotein complex; this interaction plays a role in virion budding. Interacts with host eIF4E; this interaction results in eIF4E reduced affinity for its substrate, the 5'-m7 G cap structure. Interacts (via late-budding domain) with host TSG101; this interaction is essential for budding and release of viral particles. Interacts with host RPLP0; this interaction may serve to load ribosome-like particles inside the virion. Interacts with host PML; this interaction induces PML bodies redistribution in the cytoplasm upon viral infection. Post-translationally, myristoylation is required for the role of RING finger protein Z in assembly and budding.

The protein localises to the virion. The protein resides in the host cytoplasm. It is found in the host perinuclear region. It localises to the host cell membrane. In terms of biological role, plays a crucial role in virion assembly and budding. Expressed late in the virus life cycle, it acts as an inhibitor of viral transcription and RNA synthesis by interacting with the viral polymerase L. Presumably recruits the NP encapsidated genome to cellular membranes at budding sites via direct interaction with NP. Plays critical roles in the final steps of viral release by interacting with host TSG101, a member of the vacuolar protein-sorting pathway and using other cellular host proteins involved in vesicle formation pathway. The budding of the virus progeny occurs after association of protein Z with the viral glycoprotein complex SSP-GP1-GP2 at the cell periphery, step that requires myristoylation of protein Z. Also selectively represses protein production by associating with host eIF4E. In cell-based minigenome assay, has an inhibitory effect on the ribonucleoprotein machinery (vRNP), which is responsible for the replication and transcription of the viral genome. The chain is RING finger protein Z from Akodon azarae (Azara's grass mouse).